The following is a 712-amino-acid chain: Semaphorin-1A (712 aa).

The first 20 residues, 1–20 (MVVKILVWSICLIALCHAWM), serve as a signal peptide directing secretion. The Sema domain occupies 21-483 (PDSSSKLINH…GKDEIRLANL (463 aa)). Residues 21–601 (PDSSSKLINH…IGGCAVRQQL (581 aa)) are Extracellular-facing. N-linked (GlcNAc...) asparagine glycans are attached at residues Asn42 and Asn69. 2 cysteine pairs are disulfide-bonded: Cys95-Cys105 and Cys123-Cys132. N-linked (GlcNAc...) asparagine glycosylation is found at Asn161 and Asn265. Disulfide bonds link Cys242–Cys357, Cys266–Cys316, Cys486–Cys503, and Cys495–Cys512. Residues 602-622 (VIYTAGTLHIVVVVVSIVGLF) form a helical membrane-spanning segment. Over 623 to 712 (SWLYSGLSVF…TLQKIKKTYI (90 aa)) the chain is Cytoplasmic.

Belongs to the semaphorin family.

The protein resides in the membrane. Functionally, plays a role in growth cones guidance. This Tribolium confusum (Confused flour beetle) protein is Semaphorin-1A (SEMA-1A).